The chain runs to 118 residues: NADPH-dependent 7-cyano-7-deazaguanine reductase (118 aa).

The Thioimide intermediate role is filled by C34. D41 serves as the catalytic Proton donor. Substrate-binding positions include 56–58 (VEL) and 75–76 (HE).

The protein belongs to the GTP cyclohydrolase I family. QueF type 1 subfamily.

The protein localises to the cytoplasm. It catalyses the reaction 7-aminomethyl-7-carbaguanine + 2 NADP(+) = 7-cyano-7-deazaguanine + 2 NADPH + 3 H(+). It functions in the pathway tRNA modification; tRNA-queuosine biosynthesis. Functionally, catalyzes the NADPH-dependent reduction of 7-cyano-7-deazaguanine (preQ0) to 7-aminomethyl-7-deazaguanine (preQ1). This chain is NADPH-dependent 7-cyano-7-deazaguanine reductase, found in Halorhodospira halophila (strain DSM 244 / SL1) (Ectothiorhodospira halophila (strain DSM 244 / SL1)).